A 189-amino-acid polypeptide reads, in one-letter code: Notch ligand osm-11 (189 aa).

The signal sequence occupies residues 1–18; sequence MNFITVAALAIVMVLAQA.

In terms of assembly, may interact with lin-12/Notch receptor. As to expression, expressed in coelomocytes (at protein level).

It is found in the apical cell membrane. Its function is as follows. Probable secreted lin-12/Notch ligand or co-ligand involved in the mediation of Notch signaling. Involved in the lin-12/Notch pathway signaling of cell fate in vulval precursor cells (VPCs), acting redundantly with dsl-1 and lag-2. Required for normal octanol avoidance response, acting via both lin-12/Notch and glp-1/Notch signaling pathways in neurons, in concert with lag-2. Involved in regulation of sleep-like quiescence during the larval to adult transition, acting via Notch receptor activation and in parallel with EGF signaling. This chain is Notch ligand osm-11, found in Caenorhabditis elegans.